A 206-amino-acid chain; its full sequence is Protein-methionine-sulfoxide reductase heme-binding subunit MsrQ (206 aa).

A run of 6 helical transmembrane segments spans residues 10–30 (VFIAAAVWPLFWLYEAWSAVL), 42–62 (LGLGTLILLLITLAMTPLQKL), 75–95 (LGLWCFAYVVLHLAAYCVFVL), 110–130 (PYIIVGALGFLLLLVLAVTSN), 147–167 (LVYVVLGLGLLHMLWIVRADL), and 169–189 (EWAIYASIGALLLVLRIPPVM).

It belongs to the MsrQ family. Heterodimer of a catalytic subunit (MsrP) and a heme-binding subunit (MsrQ). It depends on FMN as a cofactor. Heme b is required as a cofactor.

It is found in the cell inner membrane. Its function is as follows. Part of the MsrPQ system that repairs oxidized periplasmic proteins containing methionine sulfoxide residues (Met-O), using respiratory chain electrons. Thus protects these proteins from oxidative-stress damage caused by reactive species of oxygen and chlorine generated by the host defense mechanisms. MsrPQ is essential for the maintenance of envelope integrity under bleach stress, rescuing a wide series of structurally unrelated periplasmic proteins from methionine oxidation. MsrQ provides electrons for reduction to the reductase catalytic subunit MsrP, using the quinone pool of the respiratory chain. The sequence is that of Protein-methionine-sulfoxide reductase heme-binding subunit MsrQ from Pseudomonas fluorescens (strain SBW25).